The chain runs to 305 residues: Aspartate carbamoyltransferase catalytic subunit (305 aa).

Residues Arg-56 and Thr-57 each coordinate carbamoyl phosphate. Lys-85 is a binding site for L-aspartate. Carbamoyl phosphate-binding residues include Arg-106, His-134, and Gln-137. Residues Arg-167 and Arg-227 each contribute to the L-aspartate site. Residues Leu-266 and Pro-267 each coordinate carbamoyl phosphate.

This sequence belongs to the aspartate/ornithine carbamoyltransferase superfamily. ATCase family. As to quaternary structure, heterooligomer of catalytic and regulatory chains.

It catalyses the reaction carbamoyl phosphate + L-aspartate = N-carbamoyl-L-aspartate + phosphate + H(+). It functions in the pathway pyrimidine metabolism; UMP biosynthesis via de novo pathway; (S)-dihydroorotate from bicarbonate: step 2/3. Its function is as follows. Catalyzes the condensation of carbamoyl phosphate and aspartate to form carbamoyl aspartate and inorganic phosphate, the committed step in the de novo pyrimidine nucleotide biosynthesis pathway. The protein is Aspartate carbamoyltransferase catalytic subunit of Thermoplasma acidophilum (strain ATCC 25905 / DSM 1728 / JCM 9062 / NBRC 15155 / AMRC-C165).